Consider the following 1682-residue polypeptide: Sodium channel protein type 7 subunit alpha (1682 aa).

Residues 1-117 (MLASPEPKGL…RRTTIKVLVH (117 aa)) lie on the Cytoplasmic side of the membrane. One copy of the I repeat lies at 100–401 (TLSPFNCIRR…ILAMAYEEEK (302 aa)). A helical membrane pass occupies residues 118-137 (PFFQLFILISVLIDCVFMSL). Over 138-141 (TNLP) the chain is Extracellular. A helical membrane pass occupies residues 142-167 (KWRPVLENTLLGIYTFEILVKLFARG). Residues 168 to 178 (VWAGSFSFLGD) lie on the Cytoplasmic side of the membrane. The chain crosses the membrane as a helical span at residues 179–196 (PWNWLDFSVTVFEVIIRY). At 197 to 200 (SPLD) the chain is on the extracellular side. The chain crosses the membrane as a helical span at residues 201-219 (FIPTLQTARTLRILKIIPL). The Cytoplasmic portion of the chain corresponds to 220-237 (NQGLKSLVGVLIHCLKQL). The chain crosses the membrane as a helical span at residues 238–259 (IGVIILTLFFLSIFSLIGMGLF). Topologically, residues 260 to 338 (MGNLKHKCFR…PDQGFTNFDS (79 aa)) are extracellular. An intrachain disulfide couples C267 to C307. 3 N-linked (GlcNAc...) asparagine glycosylation sites follow: N276, N281, and N309. An intramembrane region (pore-forming) is located at residues 339–366 (FGWALFALFRLMAQDYPEVLYHQILYAS). G367 is a topological domain (extracellular). Residues 368-407 (KVYMIFFVVVSFLFSFYMASLFLGILAMAYEEEKQRVGEI) traverse the membrane as a helical segment. Residues 408-505 (SKKIEPKFQQ…EFVHRIIMAP (98 aa)) lie on the Cytoplasmic side of the membrane. At S442 the chain carries Phosphoserine; by PKA. The stretch at 487-758 (CSPCWLKLKE…QLAVARIKKG (272 aa)) is one II repeat. Residues 506-521 (FTDLFLIICIILNVCF) form a helical membrane-spanning segment. Over 522-530 (LTLEHYPMS) the chain is Extracellular. Residues 531–559 (KQTNTLLNIGNLVFIGIFTAEMIFKIIAM) traverse the membrane as a helical segment. The Cytoplasmic portion of the chain corresponds to 560-568 (HPYGYFQVG). A helical membrane pass occupies residues 569 to 586 (WNIFDSMIVFHGLIELCL). At 587–592 (ANVAGM) the chain is on the extracellular side. Residues 593–609 (ALLRLFRMLRIFKLGKY) form a helical membrane-spanning segment. The Cytoplasmic portion of the chain corresponds to 610 to 626 (WPTFQILMWSLSNSWVA). The helical transmembrane segment at 627-655 (LKDLVLLLFTFIFFSAAFGMKLFGKNYEE) threads the bilayer. Residues 656–673 (FVCHIDKDCQLPRWHMHD) lie on the Extracellular side of the membrane. 2 disulfides stabilise this stretch: C658–C664 and C696–C705. The segment at residues 674 to 700 (FFHSFLNVFRILCGEWVETLWDCMEVA) is an intramembrane region (pore-forming). Residue G701 is a topological domain, extracellular. The chain crosses the membrane as a helical span at residues 702 to 732 (QSWCIPFYLMVILIGNLLVLYLFLALVSSFS). The Cytoplasmic segment spans residues 733–934 (SCKDVTAEEN…KTCCKIVENN (202 aa)). A Phosphothreonine; by PKA modification is found at T777. The segment at 801–871 (TQDFLKDKEK…SKEKIKQSSS (71 aa)) is disordered. Over residues 804–819 (FLKDKEKSSGTEKNAT) the composition is skewed to basic and acidic residues. Polar residues predominate over residues 820–834 (ENESQSLIPSPSVSE). S843 is modified (phosphoserine). Residues S869 and S905 each carry the phosphoserine; by PKA modification. The III repeat unit spans residues 916 to 1224 (KGKIWQNIRK…RKQYRRLKKL (309 aa)). Residues 935–953 (WFKCFIGLVTLLSTGTLAF) traverse the membrane as a helical segment. Over 954–961 (EDIYMDQR) the chain is Extracellular. The helical transmembrane segment at 962-990 (KTIKILLEYADMIFTYIFILEMLLKWMAY) threads the bilayer. Residues 991–998 (GFKAYFSN) lie on the Cytoplasmic side of the membrane. Residues 999 to 1020 (GWYRLDFVVVIVFCLSLIGKTR) traverse the membrane as a helical segment. E1021 is a topological domain (extracellular). A helical membrane pass occupies residues 1022 to 1040 (ELKPLISMKFLRPLRVLSQ). The Cytoplasmic portion of the chain corresponds to 1041–1055 (FERMKVVVRALIKTT). A helical transmembrane segment spans residues 1056–1080 (LPTLNVFLVCLMIWLIFSIMGVDLF). At 1081–1127 (AGRFYECIDPTSGERFPSSEVMNKSRCESLLFNESMLWENAKMNFDN) the chain is on the extracellular side. A disulfide bridge links C1087 with C1107. N-linked (GlcNAc...) asparagine glycans are attached at residues N1103 and N1113. The segment at residues 1128–1154 (VGNGFLSLLQVATFNGWITIMNSAIDS) is an intramembrane region (pore-forming). Residues 1155-1167 (VAVNIQPHFEVNI) lie on the Extracellular side of the membrane. Residues 1168-1202 (YMYCYFINFIIFGVFLPLSMLITVIIDNFNKHKIK) form a helical membrane-spanning segment. The Cytoplasmic segment spans residues 1203–1250 (LGGSNIFITVKQRKQYRRLKKLMYEDSQRPVPRPLNKLQGFIFDVVTS). Residues 1233 to 1531 (VPRPLNKLQG…WKRFDPDRTQ (299 aa)) form an IV repeat. The helical transmembrane segment at 1251 to 1272 (QAFNVIVMVLICFQAIAMMIDT) threads the bilayer. At 1273–1276 (DVQS) the chain is on the extracellular side. The helical transmembrane segment at 1277–1305 (LQMSIALYWINSIFVMLYTMECILKLIAF) threads the bilayer. The Cytoplasmic segment spans residues 1306 to 1312 (RCFYFTI). Residues 1313–1338 (AWNIFDFMVVIFSITGLCLPMTVGSY) form a helical membrane-spanning segment. Residues 1339 to 1341 (LVP) are Extracellular-facing. Residues 1342-1362 (PSLVQLILLSRIIHMLRLGKG) traverse the membrane as a helical segment. Topologically, residues 1363-1377 (PKVFHNLMLPLMLSL) are cytoplasmic. Residues 1378–1402 (PALLNIILLIFLVMFIYAVFGMYNF) traverse the membrane as a helical segment. The Extracellular segment spans residues 1403-1420 (AYVKKEAGINDVSNFETF). An intramembrane region (pore-forming) is located at residues 1421–1444 (GNSMLCLFQVAIFAGWDGMLDAIF). Residues 1445–1468 (NSKWSDCDPDKINPGTQVRGDCGN) lie on the Extracellular side of the membrane. An intrachain disulfide couples C1451 to C1466. A helical membrane pass occupies residues 1469–1504 (PSVGIFYFVSYILISWLIIVNMYIVVVMEFLNIASK). The Cytoplasmic segment spans residues 1505–1682 (KKNKTLSEDD…KEKSPIQSQI (178 aa)).

It belongs to the sodium channel (TC 1.A.1.10) family. SCN7A subfamily. As to quaternary structure, the sodium channel formed by SCN7A is probably a heterooligomeric complex consisting of the ion conducting pore forming alpha subunit SCN7A and regulatory beta subunits such as SCN3B. Interacts with ATP1A1; activates ATP1A1 and thereby indirectly signals to nearby neurons to regulate sodium homeostasis. As to expression, heart and uterus.

The protein resides in the cell membrane. The enzyme catalyses Na(+)(in) = Na(+)(out). In terms of biological role, sodium leak channel functioning as an osmosensor regulating sodium ion levels in various tissues and organs. While most sodium channels are voltage-gated, SCN7A is not and lets sodium flow through membrane along its concentration gradient. In glial cells of the central nervous system, senses body-fluid sodium levels and controls salt intake behavior as well as voluntary water intake through activation of nearby neurons to maintain appropriate sodium levels in the body. By mediating sodium influx into keratinocytes, also plays a role in skin barrier homeostasis. This Homo sapiens (Human) protein is Sodium channel protein type 7 subunit alpha.